Here is a 485-residue protein sequence, read N- to C-terminus: GlcNAc-binding protein A (485 aa).

A signal peptide spans 1–29; that stretch reads MKKQPQKTLLAIALSVVSGTAMSHGYVSA. Residues 30–200 form the Chitin-binding type-4 domain; the sequence is VENGVAEARV…SFYNVIDVKF (171 aa). One can recognise a Chitin-binding type-3 domain in the interval 437–478; the sequence is ADTKVLASDGAIYQCKPFPYSGYCVQWTPTATQYQPGTGSHW.

This sequence belongs to the GbpA family.

Its subcellular location is the secreted. Probably interacts with GlcNAc residues. May promote attachment to both epithelial cell surfaces and chitin. The sequence is that of GlcNAc-binding protein A from Vibrio vulnificus (strain CMCP6).